The chain runs to 487 residues: L-tartrate/succinate antiporter (487 aa).

14 helical membrane passes run Tyr-10 to Glu-30, Thr-33 to Pro-53, Gly-54 to Phe-74, Trp-93 to Gly-113, Thr-137 to Ser-157, Ile-189 to Leu-209, Leu-230 to Val-250, Leu-292 to Val-312, Gly-313 to Ser-333, Val-340 to Ile-360, Ser-370 to Leu-390, Phe-393 to Leu-413, Ile-418 to Thr-438, and Ile-465 to Val-485.

This sequence belongs to the SLC13A/DASS transporter (TC 2.A.47) family. DIT1 subfamily.

The protein resides in the cell inner membrane. The catalysed reaction is (2R,3R)-tartrate(out) + succinate(in) = (2R,3R)-tartrate(in) + succinate(out). Functionally, catalyzes the uptake of tartrate in exchange for intracellular succinate. Essential for anaerobic L-tartrate fermentation. The protein is L-tartrate/succinate antiporter (ttdT) of Shigella dysenteriae serotype 1 (strain Sd197).